The sequence spans 510 residues: Anaerobic nitric oxide reductase transcription regulator NorR (510 aa).

A Sigma-54 factor interaction domain is found at 188–417 (IIGNSQGMRT…LEHVIKRAAV (230 aa)). Residues 216–223 (GETGVGKE) and 279–288 (ADGGTLFLDE) each bind ATP. Positions 486–505 (WAATARQLELDSGNLHRLAK) form a DNA-binding region, H-T-H motif.

It participates in nitrogen metabolism; nitric oxide reduction. In terms of biological role, required for the expression of anaerobic nitric oxide (NO) reductase, acts as a transcriptional activator for at least the norVW operon. Activation also requires sigma-54. This Vibrio vulnificus (strain CMCP6) protein is Anaerobic nitric oxide reductase transcription regulator NorR.